We begin with the raw amino-acid sequence, 464 residues long: ATP synthase subunit beta (464 aa).

154–161 (GGAGVGKT) provides a ligand contact to ATP.

This sequence belongs to the ATPase alpha/beta chains family. F-type ATPases have 2 components, CF(1) - the catalytic core - and CF(0) - the membrane proton channel. CF(1) has five subunits: alpha(3), beta(3), gamma(1), delta(1), epsilon(1). CF(0) has three main subunits: a(1), b(2) and c(9-12). The alpha and beta chains form an alternating ring which encloses part of the gamma chain. CF(1) is attached to CF(0) by a central stalk formed by the gamma and epsilon chains, while a peripheral stalk is formed by the delta and b chains.

It is found in the cell inner membrane. It carries out the reaction ATP + H2O + 4 H(+)(in) = ADP + phosphate + 5 H(+)(out). Produces ATP from ADP in the presence of a proton gradient across the membrane. The catalytic sites are hosted primarily by the beta subunits. In Blochmanniella floridana, this protein is ATP synthase subunit beta.